The chain runs to 1677 residues: ELMO domain-containing protein E (1677 aa).

Disordered regions lie at residues 112 to 139 (TTTS…SSPS), 168 to 194 (NSKD…SNIK), 264 to 372 (QLHG…NTTE), 592 to 625 (DDDN…RSNS), 775 to 801 (PNSN…STNN), 888 to 947 (INKN…NQDI), 982 to 1002 (KIRS…SQPE), 1047 to 1075 (STNN…ETRS), 1122 to 1141 (KQKS…GNVS), 1197 to 1248 (NNNI…DNHA), 1261 to 1404 (DDDD…RKKR), 1434 to 1454 (SPGS…PQPE), 1467 to 1593 (KNPE…GDVS), and 1654 to 1677 (ESQR…SSSK). Low complexity-rich tracts occupy residues 115–139 (SSSS…SSPS) and 172–194 (TNNS…SNIK). The segment covering 269-278 (SIGGGGGGSG) has biased composition (gly residues). Composition is skewed to low complexity over residues 307–334 (SQSN…KPNN), 341–352 (TTTTTTTTTTTS), and 597–616 (NNNN…NNYN). Positions 492–710 (SHQILLSDLW…HTREIIEKVC (219 aa)) constitute an ELMO domain. A compositionally biased stretch (gly residues) spans 891–903 (NGGGGGGGGGGGV). The span at 922–933 (IDDSDDENDNDE) shows a compositional bias: acidic residues. Composition is skewed to low complexity over residues 934 to 946 (VNNN…INQD) and 985 to 996 (SSSSTPDTSSPP). A coiled-coil region spans residues 1186–1212 (LLDDVLDLNQTNNNIDNENDDINEAII). Residues 1228–1238 (EEEEEEEEEEE) are compositionally biased toward acidic residues. Residues 1285 to 1305 (NNTTTTTTTTTTTTTTTTNTT) show a composition bias toward low complexity. Over residues 1306–1334 (GQKRISILSTDTNRPGSSNYGESSLSNGS) the composition is skewed to polar residues. A compositionally biased stretch (acidic residues) spans 1387 to 1397 (DDEDDEDDDDK). Over residues 1445–1454 (PHLSVSPQPE) the composition is skewed to polar residues. Composition is skewed to low complexity over residues 1475–1488 (LSSS…PLLS), 1503–1574 (SNLI…PSSS), and 1663–1677 (ASSS…SSSK).

The polypeptide is ELMO domain-containing protein E (elmoE) (Dictyostelium discoideum (Social amoeba)).